The sequence spans 214 residues: dITP/XTP pyrophosphatase (214 aa).

Substrate is bound at residue 13–18 (SHNKGK). Glutamate 45 and aspartate 74 together coordinate Mg(2+). Catalysis depends on aspartate 74, which acts as the Proton acceptor. Substrate is bound by residues serine 75, 163–166 (FGYD), lysine 186, and 199–200 (HR).

This sequence belongs to the HAM1 NTPase family. In terms of assembly, homodimer. Mg(2+) is required as a cofactor.

It catalyses the reaction XTP + H2O = XMP + diphosphate + H(+). The enzyme catalyses dITP + H2O = dIMP + diphosphate + H(+). The catalysed reaction is ITP + H2O = IMP + diphosphate + H(+). Functionally, pyrophosphatase that catalyzes the hydrolysis of nucleoside triphosphates to their monophosphate derivatives, with a high preference for the non-canonical purine nucleotides XTP (xanthosine triphosphate), dITP (deoxyinosine triphosphate) and ITP. Seems to function as a house-cleaning enzyme that removes non-canonical purine nucleotides from the nucleotide pool, thus preventing their incorporation into DNA/RNA and avoiding chromosomal lesions. This is dITP/XTP pyrophosphatase from Agrobacterium fabrum (strain C58 / ATCC 33970) (Agrobacterium tumefaciens (strain C58)).